A 396-amino-acid polypeptide reads, in one-letter code: Septu protein PtuA (396 aa).

Its function is as follows. Component of antiviral defense system Septu type I, composed of PtuA and PtuB. Expression of Septu type I in B.subtilis (strain BEST7003) confers resistance to phages SBSphiC and SBSphiJ. May be an ATPase. This Bacillus thuringiensis protein is Septu protein PtuA.